A 351-amino-acid polypeptide reads, in one-letter code: Biotin synthase (351 aa).

The Radical SAM core domain maps to 49-265 (NRVRIHILDN…LSVFRLVNPD (217 aa)). Residues cysteine 64, cysteine 68, and cysteine 71 each contribute to the [4Fe-4S] cluster site. [2Fe-2S] cluster-binding residues include cysteine 108, cysteine 140, cysteine 200, and arginine 269.

The protein belongs to the radical SAM superfamily. Biotin synthase family. In terms of assembly, homodimer. The cofactor is [4Fe-4S] cluster. [2Fe-2S] cluster is required as a cofactor.

The catalysed reaction is (4R,5S)-dethiobiotin + (sulfur carrier)-SH + 2 reduced [2Fe-2S]-[ferredoxin] + 2 S-adenosyl-L-methionine = (sulfur carrier)-H + biotin + 2 5'-deoxyadenosine + 2 L-methionine + 2 oxidized [2Fe-2S]-[ferredoxin]. It functions in the pathway cofactor biosynthesis; biotin biosynthesis; biotin from 7,8-diaminononanoate: step 2/2. Catalyzes the conversion of dethiobiotin (DTB) to biotin by the insertion of a sulfur atom into dethiobiotin via a radical-based mechanism. The polypeptide is Biotin synthase (Leptospira biflexa serovar Patoc (strain Patoc 1 / Ames)).